The primary structure comprises 526 residues: tRNA modification GTPase MSS1, mitochondrial (526 aa).

A mitochondrion-targeting transit peptide spans 1-19 (MNSASFLQSRLISRSFLVR). In terms of domain architecture, TrmE-type G spans 274-444 (GIKLVLLGAP…LISTLTSNFE (171 aa)). Residues 281–288 (GAPNVGKS), 328–332 (DTAGI), and 394–397 (NKSD) each bind GTP.

This sequence belongs to the TRAFAC class TrmE-Era-EngA-EngB-Septin-like GTPase superfamily. TrmE GTPase family. As to quaternary structure, forms a heterodimer with MTO1.

It is found in the mitochondrion. GTPase involved in the 5-carboxymethylaminomethyl modification (mnm(5)s(2)U34) of the wobble uridine base in mitochondrial tRNAs. Involved in the expression of cytochrome c oxidase subunit 1 (COX1). Works in association with the small subunit of mitoribosomes. The sequence is that of tRNA modification GTPase MSS1, mitochondrial (MSS1) from Saccharomyces cerevisiae (strain ATCC 204508 / S288c) (Baker's yeast).